The sequence spans 860 residues: DNA mismatch repair protein MutS (860 aa).

618 to 625 (GPNMGGKS) contacts ATP.

Belongs to the DNA mismatch repair MutS family.

Its function is as follows. This protein is involved in the repair of mismatches in DNA. It is possible that it carries out the mismatch recognition step. This protein has a weak ATPase activity. In Shewanella piezotolerans (strain WP3 / JCM 13877), this protein is DNA mismatch repair protein MutS.